We begin with the raw amino-acid sequence, 834 residues long: Enhancer of filamentation 1 (834 aa).

The SH3 domain maps to 3 to 65 (ARNLMARALY…PGNRVKLLIG (63 aa)). 7 positions are modified to phosphotyrosine: tyrosine 92, tyrosine 164, tyrosine 166, tyrosine 177, tyrosine 189, tyrosine 214, and tyrosine 223. Serine 296 is subject to Phosphoserine. A Phosphotyrosine modification is found at tyrosine 317. Disordered regions lie at residues 328–402 (PPAE…DKRL) and 584–624 (SQMP…SERS). Basic and acidic residues predominate over residues 332 to 344 (TSEKANPEERDGV). A Caspase cleavage related site motif is present at residues 360–363 (DVVD). A compositionally biased stretch (low complexity) spans 368–397 (LSFSSTGSTRSNMSTSSTTSKESSVSASPS). Residue serine 369 is modified to Phosphoserine. The segment at 710-760 (FYYDQCETHYISLLNAIDALFSCVSSAQPPRIFVAHSKFVILSAHKLVFIG) is divergent helix-loop-helix motif. The segment at 710 to 834 (FYYDQCETHY…KRSLLEMATF (125 aa)) is required for interaction with PLK1. Serine 780 is subject to Phosphoserine. Threonine 804 bears the Phosphothreonine mark.

Belongs to the CAS family. Homodimer. Forms heterodimers with BCAR1/p130cas. Forms complexes with PTK2B/RAFTK, adapter protein CRKL and LYN kinase. Part of a complex composed of NEDD9, AURKA and CTTN; within the complex NEDD9 acts as a scaffold protein and is required for complex formation. Part of a ternary complex composed of SMAD3, ITCH/AIP4 and NEDD9/HEF1; within the complex NEDD9/HEF1 interacts (via N-terminus) with ITCH/AIP4; the complex mediates ubiquitination and proteasomal degradation of NEDD9/HEF1. Interacts with ID2. Interacts with CTTN (via N-terminus). Interacts with MICAL. Interacts with TXNL4/DIM1. Interacts with BCAR3 (via Ras-GEF domain). Interacts with SH2D3C isoform 1 and isoform 2. Interacts with BCAR3. Interacts with ECT2. Interacts with PTPN11/SHP-2 (via SH2 domains); the interaction is enhanced when NEDD9/CAS-L is tyrosine phosphorylated. Interacts (via C-terminus) with PLK1 (via polo box domain). Interacts with NKX2-5. Interacts with SMAD3; the interaction is inhibited by oxidation of NEDD9. Interacts with ABL1; interaction is induced by CXCL12-mediated phosphorylation of NEDD/HEF1. Interacts (via SH3 domain) with PTK2/FAK. Interacts with FYN; in the presence of PTK2. Interacts with INPPL1/SHIP2. In terms of processing, polyubiquitinated by ITCH/AIP4, leading to proteasomal degradation. Post-translationally, PTK2/FAK1 phosphorylates the protein at the YDYVHL motif (conserved among all cas proteins) following integrin stimulation. The SRC family kinases (FYN, SRC, LCK and CRK) are recruited to the phosphorylated sites and can phosphorylate other tyrosine residues. Ligation of either integrin beta-1 or B-cell antigen receptor on tonsillar B-cells and B-cell lines promotes tyrosine phosphorylation and both integrin and BCR-mediated tyrosine phosphorylation requires an intact actin network. Phosphorylation is required to recruit NEDD9 to T-cell receptor microclusters at the periphery of newly formed immunological synapses. In fibroblasts transformation with oncogene v-ABL results in an increase in tyrosine phosphorylation. Transiently phosphorylated following CD3 cross-linking and this phosphorylated form binds to CRKL and C3G. A mutant lacking the SH3 domain is phosphorylated upon CD3 cross-linking but not upon integrin beta-1 cross-linking. Tyrosine phosphorylation occurs upon stimulation of the G-protein coupled C1a calcitonin receptor. Calcitonin-stimulated tyrosine phosphorylation is mediated by calcium- and protein kinase C-dependent mechanisms and requires the integrity of the actin cytoskeleton. Phosphorylation at Ser-369 induces proteasomal degradation. Phosphorylated by LYN. Phosphorylation at Ser-780 by CSNK1D or CSNK1E, or phosphorylation of Thr-804 by CSNK1E enhances the interaction of NEDD9 with PLK1.

It localises to the cytoplasm. It is found in the cell cortex. The protein localises to the nucleus. Its subcellular location is the golgi apparatus. The protein resides in the cell projection. It localises to the lamellipodium. It is found in the cell junction. The protein localises to the focal adhesion. Its subcellular location is the cytoskeleton. The protein resides in the spindle pole. It localises to the cilium. It is found in the cilium basal body. The protein localises to the basolateral cell membrane. Its function is as follows. Negatively regulates embryonic fibroblast migration. May play an important role in integrin beta-1 or B cell antigen receptor (BCR) mediated signaling in B- and T-cells. Integrin beta-1 stimulation leads to recruitment of various proteins including CRKl and SHPTP2 to the tyrosine phosphorylated form. Promotes adhesion and migration of lymphocytes; as a result required for the correct migration of lymphocytes to the spleen and other secondary lymphoid organs. Plays a role in the organization of T-cell F-actin cortical cytoskeleton and the centralization of T-cell receptor microclusters at the immunological synapse. Negatively regulates cilia outgrowth in polarized cysts. Modulates cilia disassembly via activation of AURKA-mediated phosphorylation of HDAC6 and subsequent deacetylation of alpha-tubulin. In conjunction with NKX2-5, positively regulates transcription of genes such as COL3A1 and MMP2, resulting in increased pulmonary endothelial fibrosis in response to hypoxia. Positively regulates RANKL-induced osteoclastogenesis. Required for the maintenance of hippocampal dendritic spines in the dentate gyrus and CA1 regions, thereby involved in spatial learning and memory. The protein is Enhancer of filamentation 1 of Canis lupus familiaris (Dog).